The sequence spans 56 residues: Serine protease inhibitor Kazal-type 1 (56 aa).

One can recognise a Kazal-like domain in the interval 3 to 56 (LGREAKCNNNAGGCTKIYNPVCGTDGNTYPNECMLCVENQKRQMPVLIQRSGPC). Intrachain disulfides connect cysteine 9–cysteine 38, cysteine 16–cysteine 35, and cysteine 24–cysteine 56.

It localises to the secreted. Its function is as follows. Serine protease inhibitor which exhibits anti-trypsin activity. In the pancreas, protects against trypsin-catalyzed premature activation of zymogens. Functionally, in the male reproductive tract, binds to sperm heads where it modulates sperm capacitance by inhibiting calcium uptake and nitrogen oxide (NO) production. This Equus caballus (Horse) protein is Serine protease inhibitor Kazal-type 1 (SPINK1).